The following is a 430-amino-acid chain: tRNA(Ile)-lysidine synthase (430 aa).

Ser-21 to Ser-26 lines the ATP pocket.

This sequence belongs to the tRNA(Ile)-lysidine synthase family.

The protein resides in the cytoplasm. It carries out the reaction cytidine(34) in tRNA(Ile2) + L-lysine + ATP = lysidine(34) in tRNA(Ile2) + AMP + diphosphate + H(+). Its function is as follows. Ligates lysine onto the cytidine present at position 34 of the AUA codon-specific tRNA(Ile) that contains the anticodon CAU, in an ATP-dependent manner. Cytidine is converted to lysidine, thus changing the amino acid specificity of the tRNA from methionine to isoleucine. The chain is tRNA(Ile)-lysidine synthase from Salmonella heidelberg (strain SL476).